A 427-amino-acid polypeptide reads, in one-letter code: Adenylosuccinate synthetase (427 aa).

Residues 12–18 (GDEGKGK) and 40–42 (GHT) contribute to the GTP site. Asp-13 serves as the catalytic Proton acceptor. The Mg(2+) site is built by Asp-13 and Gly-40. IMP contacts are provided by residues 13 to 16 (DEGK), 38 to 41 (NAGH), Thr-128, Arg-142, Gln-223, Thr-238, and Arg-302. The active-site Proton donor is the His-41. 298–304 (TTTGRPR) contributes to the substrate binding site. GTP contacts are provided by residues Arg-304, 330–332 (KLD), and 412–414 (SVG).

Belongs to the adenylosuccinate synthetase family. Homodimer. It depends on Mg(2+) as a cofactor.

Its subcellular location is the cytoplasm. It carries out the reaction IMP + L-aspartate + GTP = N(6)-(1,2-dicarboxyethyl)-AMP + GDP + phosphate + 2 H(+). It participates in purine metabolism; AMP biosynthesis via de novo pathway; AMP from IMP: step 1/2. Its function is as follows. Plays an important role in the de novo pathway of purine nucleotide biosynthesis. Catalyzes the first committed step in the biosynthesis of AMP from IMP. This is Adenylosuccinate synthetase from Carboxydothermus hydrogenoformans (strain ATCC BAA-161 / DSM 6008 / Z-2901).